Reading from the N-terminus, the 359-residue chain is MPTHKKIIQDLTKEELAEKIKPAFRSKQIYDWIYHKYAASFEEMKNLPKAMREELDAEYTLAPLKTVTVQDSMDGSRKYLFELHDGHTVEAVLLLMRDKEYHEDGSVKHQERYTVCISSQVGCKVGCAFCLTAKGGFMRNLTAGEIVEQLRMIKKDNDIAANRRVNIVFMGMGEPLDNLEAVAKSVKIFAEEEGMAIAPHRQTISTSGLSSKIEKLGKMELGVNLAISLHAVDDELRQQLMPINKAYNIESIITAVKNFPVNDRKRVMFEYLVIKDVNDDISAAKKLLSLLDGIKAKVNLIYFNPYGGTEFKRPSEADMKKFQEYLTKRGLHCTIRESKGLDISAACGQLREQELEGEI.

Glu90 (proton acceptor) is an active-site residue. Residues 109-342 (HQERYTVCIS…CTIRESKGLD (234 aa)) form the Radical SAM core domain. Cys116 and Cys347 form a disulfide bridge. The [4Fe-4S] cluster site is built by Cys123, Cys127, and Cys130. S-adenosyl-L-methionine contacts are provided by residues 173–174 (GE), Ser205, 228–230 (SLH), and Asn304. Catalysis depends on Cys347, which acts as the S-methylcysteine intermediate.

The protein belongs to the radical SAM superfamily. RlmN family. [4Fe-4S] cluster is required as a cofactor.

It localises to the cytoplasm. The catalysed reaction is adenosine(2503) in 23S rRNA + 2 reduced [2Fe-2S]-[ferredoxin] + 2 S-adenosyl-L-methionine = 2-methyladenosine(2503) in 23S rRNA + 5'-deoxyadenosine + L-methionine + 2 oxidized [2Fe-2S]-[ferredoxin] + S-adenosyl-L-homocysteine. The enzyme catalyses adenosine(37) in tRNA + 2 reduced [2Fe-2S]-[ferredoxin] + 2 S-adenosyl-L-methionine = 2-methyladenosine(37) in tRNA + 5'-deoxyadenosine + L-methionine + 2 oxidized [2Fe-2S]-[ferredoxin] + S-adenosyl-L-homocysteine. Specifically methylates position 2 of adenine 2503 in 23S rRNA and position 2 of adenine 37 in tRNAs. m2A2503 modification seems to play a crucial role in the proofreading step occurring at the peptidyl transferase center and thus would serve to optimize ribosomal fidelity. This is Dual-specificity RNA methyltransferase RlmN from Sulfurovum sp. (strain NBC37-1).